The chain runs to 247 residues: Carboxy-S-adenosyl-L-methionine synthase (247 aa).

S-adenosyl-L-methionine-binding positions include tyrosine 40, 65-67, 90-91, 122-123, asparagine 137, and arginine 204; these read GSS, DN, and DI.

This sequence belongs to the class I-like SAM-binding methyltransferase superfamily. Cx-SAM synthase family. Homodimer.

The enzyme catalyses prephenate + S-adenosyl-L-methionine = carboxy-S-adenosyl-L-methionine + 3-phenylpyruvate + H2O. Catalyzes the conversion of S-adenosyl-L-methionine (SAM) to carboxy-S-adenosyl-L-methionine (Cx-SAM). The polypeptide is Carboxy-S-adenosyl-L-methionine synthase (Pseudomonas fluorescens (strain ATCC BAA-477 / NRRL B-23932 / Pf-5)).